The chain runs to 247 residues: NAD-dependent protein deacetylase 2 (247 aa).

The Deacetylase sirtuin-type domain occupies 1 to 247; that stretch reads MDQIRQLAQW…ASVRKQIQAE (247 aa). 8 residues coordinate NAD(+): Ala23, Thr27, Phe34, Arg35, Gln103, Ile105, Asp106, and His121. Phe34 is a binding site for nicotinamide. Residues Ile105 and Asp106 each contribute to the nicotinamide site. Catalysis depends on His121, which acts as the Proton acceptor. Positions 129, 132, 149, and 152 each coordinate Zn(2+). Positions 188, 189, 215, and 233 each coordinate NAD(+).

The protein belongs to the sirtuin family. Class U subfamily. Requires Zn(2+) as cofactor.

Its subcellular location is the cytoplasm. The catalysed reaction is N(6)-acetyl-L-lysyl-[protein] + NAD(+) + H2O = 2''-O-acetyl-ADP-D-ribose + nicotinamide + L-lysyl-[protein]. In terms of biological role, NAD-dependent protein deacetylase which modulates the activities of several enzymes which are inactive in their acetylated form. This is NAD-dependent protein deacetylase 2 from Geobacillus kaustophilus (strain HTA426).